Here is a 321-residue protein sequence, read N- to C-terminus: Acetyl-coenzyme A carboxylase carboxyl transferase subunit alpha (321 aa).

In terms of domain architecture, CoA carboxyltransferase C-terminal spans 39-293; sequence RLQQKSQTLA…RRALGDSLRQ (255 aa).

The protein belongs to the AccA family. Acetyl-CoA carboxylase is a heterohexamer composed of biotin carboxyl carrier protein (AccB), biotin carboxylase (AccC) and two subunits each of ACCase subunit alpha (AccA) and ACCase subunit beta (AccD).

Its subcellular location is the cytoplasm. It catalyses the reaction N(6)-carboxybiotinyl-L-lysyl-[protein] + acetyl-CoA = N(6)-biotinyl-L-lysyl-[protein] + malonyl-CoA. It functions in the pathway lipid metabolism; malonyl-CoA biosynthesis; malonyl-CoA from acetyl-CoA: step 1/1. Component of the acetyl coenzyme A carboxylase (ACC) complex. First, biotin carboxylase catalyzes the carboxylation of biotin on its carrier protein (BCCP) and then the CO(2) group is transferred by the carboxyltransferase to acetyl-CoA to form malonyl-CoA. This Bordetella avium (strain 197N) protein is Acetyl-coenzyme A carboxylase carboxyl transferase subunit alpha.